The sequence spans 271 residues: MRFSVLLTGLAAAGSIATAERTCGAVPPRAYEKEFTEALNSLSPEAASADLTAGITIDTYLHVLTSGQTGNIPDSQLQAQINAMNQHYSQAGVQFKLVKATRTDNANWASGRDEAGMKKALHMGTYSSLNIYFIPNLSSGLLGICYFPRANPSQTTIIMDGCMVRSGTVPGGETTNYNQGKTATHEVGHFLGLYHVFSENGSCVDADMVADTPAQSKKTSGCPSSQDSCPGGGVDSIHNYMDYSYDVCMNQFTPGQANRIAQSWRAFRAGH.

Residues 1–19 form the signal peptide; the sequence is MRFSVLLTGLAAAGSIATA. Residue N136 is glycosylated (N-linked (GlcNAc...) asparagine). H185 provides a ligand contact to Zn(2+). E186 is a catalytic residue. Position 189 (H189) interacts with Zn(2+). N-linked (GlcNAc...) asparagine glycosylation occurs at N200. C222 and C248 are oxidised to a cystine.

Belongs to the peptidase M43B family.

It is found in the secreted. Its function is as follows. Secreted metalloproteinase that allows assimilation of proteinaceous substrates. Plays a pivotal role as a pathogenicity determinant during infections and contributes to the ability of the pathogen to persist within the mammalian host. The chain is Extracellular metalloprotease ARB_05317 from Arthroderma benhamiae (strain ATCC MYA-4681 / CBS 112371) (Trichophyton mentagrophytes).